The chain runs to 268 residues: Lectin ESA-2 (268 aa).

4 tandem repeats follow at residues 1–67 (GRYT…RRGE), 68–135 (SNVY…QSGG), 136–202 (DTYN…LSGA), and 203–268 (NNYS…VATS). The 4 X approximate tandem repeats stretch occupies residues 1-268 (GRYTVQNQWG…PIGFKGVATS (268 aa)).

Monomer.

Its function is as follows. Lectin specific for high mannose N-glycans, recognizes the branched moiety of these glycans. Does not recognize other types of N-glycans or monosaccharides. Agglutinates trypsin-treated sheep and rabbit erythrocytes and untreated sheep erythrocytes. Has mitogenic activity on mouse lymphocytes. Does not require metal ions for activity. The sequence is that of Lectin ESA-2 from Eucheuma serra (Marine red alga).